Consider the following 160-residue polypeptide: Large ribosomal subunit protein uL22c (160 aa).

This sequence belongs to the universal ribosomal protein uL22 family. In terms of assembly, part of the 50S ribosomal subunit.

The protein localises to the plastid. The protein resides in the chloroplast. This protein binds specifically to 23S rRNA. Its function is as follows. The globular domain of the protein is located near the polypeptide exit tunnel on the outside of the subunit, while an extended beta-hairpin is found that lines the wall of the exit tunnel in the center of the 70S ribosome. The protein is Large ribosomal subunit protein uL22c (rpl22) of Olimarabidopsis pumila (Dwarf rocket).